The following is a 369-amino-acid chain: tRNA/tmRNA (uracil-C(5))-methyltransferase (369 aa).

Positions 190, 218, 223, 239, and 301 each coordinate S-adenosyl-L-methionine. The active-site Nucleophile is C326. The Proton acceptor role is filled by E360.

It belongs to the class I-like SAM-binding methyltransferase superfamily. RNA M5U methyltransferase family. TrmA subfamily.

It catalyses the reaction uridine(54) in tRNA + S-adenosyl-L-methionine = 5-methyluridine(54) in tRNA + S-adenosyl-L-homocysteine + H(+). The catalysed reaction is uridine(341) in tmRNA + S-adenosyl-L-methionine = 5-methyluridine(341) in tmRNA + S-adenosyl-L-homocysteine + H(+). Dual-specificity methyltransferase that catalyzes the formation of 5-methyluridine at position 54 (m5U54) in all tRNAs, and that of position 341 (m5U341) in tmRNA (transfer-mRNA). This Vibrio vulnificus (strain CMCP6) protein is tRNA/tmRNA (uracil-C(5))-methyltransferase.